Here is a 471-residue protein sequence, read N- to C-terminus: Putative metabolite transport protein YncC (471 aa).

A run of 12 helical transmembrane segments spans residues 13 to 33, 50 to 70, 88 to 108, 111 to 131, 146 to 166, 175 to 195, 256 to 276, 295 to 315, 323 to 343, 358 to 378, 393 to 413, and 416 to 436; these read LIMI…GVIN, VTEG…ALLC, FLFF…IMAV, FLLG…LAEM, LMIV…GVTM, YMLV…LKVP, LLWI…NSIM, IANI…IWLV, ILLI…IFSI, LTVL…WLVI, ISVF…PILL, and VGLS…IGFV.

It belongs to the major facilitator superfamily. Sugar transporter (TC 2.A.1.1) family.

It localises to the cell membrane. This chain is Putative metabolite transport protein YncC (yncC), found in Bacillus subtilis (strain 168).